A 232-amino-acid polypeptide reads, in one-letter code: Large ribosomal subunit protein uL1 (232 aa).

The protein belongs to the universal ribosomal protein uL1 family. Part of the 50S ribosomal subunit.

In terms of biological role, binds directly to 23S rRNA. The L1 stalk is quite mobile in the ribosome, and is involved in E site tRNA release. Functionally, protein L1 is also a translational repressor protein, it controls the translation of the L11 operon by binding to its mRNA. This is Large ribosomal subunit protein uL1 from Ruegeria pomeroyi (strain ATCC 700808 / DSM 15171 / DSS-3) (Silicibacter pomeroyi).